The following is a 618-amino-acid chain: 1-deoxy-D-xylulose-5-phosphate synthase (618 aa).

Thiamine diphosphate is bound by residues His76 and 117-119 (GHS). Asp148 is a Mg(2+) binding site. Thiamine diphosphate is bound by residues 149 to 150 (GA), Asn177, Tyr284, and Glu364. Position 177 (Asn177) interacts with Mg(2+).

Belongs to the transketolase family. DXPS subfamily. In terms of assembly, homodimer. Mg(2+) is required as a cofactor. It depends on thiamine diphosphate as a cofactor.

It carries out the reaction D-glyceraldehyde 3-phosphate + pyruvate + H(+) = 1-deoxy-D-xylulose 5-phosphate + CO2. It participates in metabolic intermediate biosynthesis; 1-deoxy-D-xylulose 5-phosphate biosynthesis; 1-deoxy-D-xylulose 5-phosphate from D-glyceraldehyde 3-phosphate and pyruvate: step 1/1. Catalyzes the acyloin condensation reaction between C atoms 2 and 3 of pyruvate and glyceraldehyde 3-phosphate to yield 1-deoxy-D-xylulose-5-phosphate (DXP). This chain is 1-deoxy-D-xylulose-5-phosphate synthase, found in Francisella philomiragia subsp. philomiragia (strain ATCC 25017 / CCUG 19701 / FSC 153 / O#319-036).